The primary structure comprises 185 residues: Ribosome-recycling factor (185 aa).

It belongs to the RRF family.

Its subcellular location is the cytoplasm. Functionally, responsible for the release of ribosomes from messenger RNA at the termination of protein biosynthesis. May increase the efficiency of translation by recycling ribosomes from one round of translation to another. In Dehalococcoides mccartyi (strain CBDB1), this protein is Ribosome-recycling factor.